The primary structure comprises 676 residues: Envelope glycoprotein (676 aa).

Residues 1-34 (MACSTLSKSPKDKIDPRDLLIPLILFLSLKGARS) form the signal peptide. Residues 35–270 (AAPGSSPHQV…SYQNLGPRIP (236 aa)) are receptor-binding domain (RBD). Over 35 to 620 (AAPGSSPHQV…FNRSPWFTTL (586 aa)) the chain is Extracellular. N-linked (GlcNAc...) asparagine; by host glycosylation occurs at Asn-46. Disulfide bonds link Cys-80-Cys-132, Cys-106-Cys-121, Cys-107-Cys-117, Cys-155-Cys-175, and Cys-167-Cys-180. His-89 lines the Zn(2+) pocket. Asp-120 serves as a coordination point for Zn(2+). An N-linked (GlcNAc...) asparagine; by host glycan is attached at Asn-202. Cysteines 212 and 218 form a disulfide. The segment at 287–321 (NPLPKPAKSPPASSSTPTLISPSPTPTQPPPAGTG) is disordered. The span at 296-308 (PPASSSTPTLISP) shows a compositional bias: low complexity. The span at 309 to 318 (SPTPTQPPPA) shows a compositional bias: pro residues. Asn-336 is a glycosylation site (N-linked (GlcNAc...) asparagine; by host). Intrachain disulfides connect Cys-346-Cys-349, Cys-346-Cys-573, Cys-376-Cys-430, Cys-395-Cys-407, Cys-437-Cys-450, and Cys-565-Cys-572. Positions 346–349 (CWLC) match the CXXC motif. 2 N-linked (GlcNAc...) asparagine; by host glycosylation sites follow: Asn-368 and Asn-375. N-linked (GlcNAc...) asparagine; by host glycans are attached at residues Asn-408 and Asn-444. Residues 482–502 (VSLTLALLLGGLTMGGIAAGV) form a fusion peptide region. The stretch at 513–547 (QQFQQLHAAVQDDLKEVEKSITNLEKSLTSLSEVV) forms a coiled coil. The interval 548 to 564 (LQNRRGLDLLFLKEGGL) is immunosuppression. The short motif at 565-573 (CAALKEECC) is the CX6CC element. Residues 621–641 (ISTIMGPLIILLLILLFGPCI) form a helical membrane-spanning segment. The S-palmitoyl cysteine; by host moiety is linked to residue Cys-640. At 642–676 (LNRLVQFVKDRISVVQALVLTQQYHQLKPLEYEPQ) the chain is on the cytoplasmic side. The short motif at 665–668 (YHQL) is the YXXL motif; contains endocytosis signal element.

As to quaternary structure, the mature envelope protein (Env) consists of a trimer of SU-TM heterodimers attached by a labile interchain disulfide bond. Specific enzymatic cleavages in vivo yield mature proteins. Envelope glycoproteins are synthesized as an inactive precursor that is N-glycosylated and processed likely by host cell furin or by a furin-like protease in the Golgi to yield the mature SU and TM proteins. The cleavage site between SU and TM requires the minimal sequence [KR]-X-[KR]-R. The R-peptide is released from the C-terminus of the cytoplasmic tail of the TM protein upon particle formation as a result of proteolytic cleavage by the viral protease. Cleavage of this peptide is required for TM to become fusogenic. Post-translationally, the CXXC motif is highly conserved across a broad range of retroviral envelope proteins. It is thought to participate in the formation of a labile disulfide bond possibly with the CX6CC motif present in the transmembrane protein. Isomerization of the intersubunit disulfide bond to an SU intrachain disulfide bond is thought to occur upon receptor recognition in order to allow membrane fusion. In terms of processing, the transmembrane protein is palmitoylated. The R-peptide is palmitoylated.

The protein resides in the virion membrane. The protein localises to the host cell membrane. Its function is as follows. The surface protein (SU) attaches the virus to the host cell by binding to its receptor. This interaction triggers the refolding of the transmembrane protein (TM) and is thought to activate its fusogenic potential by unmasking its fusion peptide. Fusion occurs at the host cell plasma membrane. The transmembrane protein (TM) acts as a class I viral fusion protein. Under the current model, the protein has at least 3 conformational states: pre-fusion native state, pre-hairpin intermediate state, and post-fusion hairpin state. During viral and target cell membrane fusion, the coiled coil regions (heptad repeats) assume a trimer-of-hairpins structure, positioning the fusion peptide in close proximity to the C-terminal region of the ectodomain. The formation of this structure appears to drive apposition and subsequent fusion of viral and target cell membranes. Membranes fusion leads to delivery of the nucleocapsid into the cytoplasm. The sequence is that of Envelope glycoprotein (env) from Friend murine leukemia virus (isolate FB29) (FrMLV).